A 115-amino-acid polypeptide reads, in one-letter code: NADH-ubiquinone oxidoreductase chain 3 (115 aa).

Helical transmembrane passes span 3 to 23 (LILM…IVAF), 56 to 76 (FFLV…LLPL), and 84 to 104 (PTLM…GLIY).

This sequence belongs to the complex I subunit 3 family.

The protein resides in the mitochondrion membrane. It catalyses the reaction a ubiquinone + NADH + 5 H(+)(in) = a ubiquinol + NAD(+) + 4 H(+)(out). Core subunit of the mitochondrial membrane respiratory chain NADH dehydrogenase (Complex I) that is believed to belong to the minimal assembly required for catalysis. Complex I functions in the transfer of electrons from NADH to the respiratory chain. The immediate electron acceptor for the enzyme is believed to be ubiquinone. The sequence is that of NADH-ubiquinone oxidoreductase chain 3 (MT-ND3) from Polypterus ornatipinnis (Ornate bichir).